Reading from the N-terminus, the 555-residue chain is Glucose-6-phosphate isomerase (555 aa).

The active-site Proton donor is Glu-365. Residues His-396 and Lys-522 contribute to the active site.

This sequence belongs to the GPI family.

It localises to the cytoplasm. It carries out the reaction alpha-D-glucose 6-phosphate = beta-D-fructose 6-phosphate. The protein operates within carbohydrate biosynthesis; gluconeogenesis. Its pathway is carbohydrate degradation; glycolysis; D-glyceraldehyde 3-phosphate and glycerone phosphate from D-glucose: step 2/4. Catalyzes the reversible isomerization of glucose-6-phosphate to fructose-6-phosphate. This is Glucose-6-phosphate isomerase from Psychrobacter arcticus (strain DSM 17307 / VKM B-2377 / 273-4).